A 49-amino-acid chain; its full sequence is Delta-actitoxin-Axm1h (49 aa).

Intrachain disulfides connect C4-C46, C6-C36, and C29-C47.

Belongs to the sea anemone sodium channel inhibitory toxin family. Type I subfamily.

It is found in the secreted. It localises to the nematocyst. Functionally, binds specifically to voltage-gated sodium channels (Nav) (site 3), thereby delaying their inactivation during signal transduction. Thus it may strongly stimulate mammalian cardiac muscle contraction. This is Delta-actitoxin-Axm1h from Anthopleura xanthogrammica (Giant green sea anemone).